A 318-amino-acid polypeptide reads, in one-letter code: Cell surface sensor SHO1 (318 aa).

The disordered stretch occupies residues 1–23 (MPSYGSLHSPSLRKMEHSRGQYG). The Cytoplasmic portion of the chain corresponds to 1–38 (MPSYGSLHSPSLRKMEHSRGQYGGGRKGMSLGNVIGDP). The chain crosses the membrane as a helical span at residues 39–59 (FALATISIAGLAWLIAFIASI). At 60 to 71 (VAQIQTTQGFPT) the chain is on the extracellular side. Residues 72–92 (YTWWTVVFYFFLIPGVFVVVA) traverse the membrane as a helical segment. Residues 93–100 (SDTIQTYH) lie on the Cytoplasmic side of the membrane. A helical membrane pass occupies residues 101 to 121 (VALVGYMACGLVLTTSSVNGL). The Extracellular segment spans residues 122 to 130 (VYSTNGAKE). A helical membrane pass occupies residues 131–151 (AAAAGFILLSMVTIVWIFYFG). Topologically, residues 152–318 (SAPSAMPRAY…IAPSNYLILL (167 aa)) are cytoplasmic. Positions 172-255 (TSNNRQTMTG…AGGAADAEIV (84 aa)) are disordered. Residues 190–214 (ETSTSVQPPQMYTSAQLNGFENPSP) are compositionally biased toward polar residues. Residues 237–250 (GLPKTTTPPAGGAA) are compositionally biased toward low complexity. Residues 259–318 (EYPYRAKAIYTYEANPDDANEISFSKHEILEVSDVSGRWWQARKETGETGIAPSNYLILL) form the SH3 domain.

This sequence belongs to the SHO1 family. Forms homooligomers.

Its subcellular location is the cell membrane. In terms of biological role, MSB2 and SHO1 have overlapping functions in recognizing various surface signals for MAPK PMK1 activation and appressorium formation. While MSB2 is critical for sensing surface hydrophobicity and cutin monomers, SHO1 may play a more important role in recognizing rice leaf waxes. This Pyricularia oryzae (strain 70-15 / ATCC MYA-4617 / FGSC 8958) (Rice blast fungus) protein is Cell surface sensor SHO1.